A 135-amino-acid chain; its full sequence is Small ribosomal subunit protein bS16m (135 aa).

The N-terminal 34 residues, Met-1–Ile-34, are a transit peptide targeting the mitochondrion. Residue Thr-130 is modified to Phosphothreonine.

Belongs to the bacterial ribosomal protein bS16 family. Component of the mitochondrial ribosome small subunit (28S) which comprises a 12S rRNA and about 30 distinct proteins.

The protein localises to the mitochondrion. This Bos taurus (Bovine) protein is Small ribosomal subunit protein bS16m (MRPS16).